We begin with the raw amino-acid sequence, 553 residues long: Solute carrier family 22 member 12 (553 aa).

A helical membrane pass occupies residues 9–29 (LVGGLGRFQVLQTMALMVSIM). Asn-56 and Asn-102 each carry an N-linked (GlcNAc...) asparagine glycan. 11 helical membrane passes run 146 to 166 (PMAQSIYLAGILVGAAACGPA), 174 to 194 (LVLTWSYLQMAVMGTAAAFAP), 195 to 215 (AFPVYCLFRFLLAFAVAGVMM), 232 to 252 (LVMTLNSLGFSFGHGLTAAVA), 260 to 280 (LLQLVVSVPFFLCFLYSWWLA), 351 to 371 (CISTLCWFAFGFTFFGLALDL), 378 to 398 (IFLLQMFIGVVDIPAKMGALL), 407 to 427 (PTLAASLLLAGLCILANTLVP), 435 to 455 (SALAVLGLGGVGAAFTCITIY), 466 to 486 (MTAVGLGQMAARGGAILGPLV), and 495 to 515 (WLPLLVYGTVPVLSGLAALLL). Phosphothreonine is present on Thr-542.

Belongs to the major facilitator (TC 2.A.1) superfamily. Organic cation transporter (TC 2.A.1.19) family. Interacts with PDZK1. N-glycosylated. Detected in kidney (at protein level). Detected in fetal and adult kidney. Detected in epithelial cells of proximal tubules in renal cortex.

Its subcellular location is the apical cell membrane. It carries out the reaction urate(out) + (S)-lactate(in) = urate(in) + (S)-lactate(out). It catalyses the reaction nicotinate(in) + urate(out) = nicotinate(out) + urate(in). The enzyme catalyses urate(out) + n chloride(in) = urate(in) + n chloride(out). The catalysed reaction is orotate(out) + nicotinate(in) = orotate(in) + nicotinate(out). Functionally, electroneutral antiporter that translocates urate across the apical membrane of proximal tubular cells in exchange for monovalent organic or inorganic anions. Involved in renal reabsorption of urate and helps maintaining blood levels of uric acid. Mediates urate uptake by an exchange with organic anions such as (S)-lactate and nicotinate, and inorganic anion Cl(-). Other inorganic anions such as Br(-), I(-) and NO3(-) may also act as counteranions that exchange for urate. Also mediates orotate tubular uptake coupled with nicotinate efflux and to a lesser extent with lactate efflux, therefore displaying a potential role in orotate renal reabsorption. Orotate transport is Cl(-)-dependent. This is Solute carrier family 22 member 12 from Homo sapiens (Human).